The sequence spans 1906 residues: Retinoic acid-induced protein 1 (1906 aa).

6 disordered regions span residues 1 to 261 (MQSF…APGQ), 273 to 299 (RLSYDQQQQQQQQQQQQQQALQSRHHA), 335 to 370 (YQTFSPSSSHSPARSVGRSPSYSSTPSPLMPNLENF), 469 to 520 (VSRT…YLSG), 538 to 571 (SPARVNSNSKAKPESVSTCSVTSPDDMSTKSDDS), and 656 to 712 (SAWP…GTKP). The segment covering 13-24 (KQQNYQQTSQET) has biased composition (polar residues). Positions 66-75 (PSGTAAAVAA) are enriched in low complexity. Positions 124-134 (PQPPPPQPQPL) are enriched in pro residues. Low complexity predominate over residues 213 to 226 (SQSFPTSSTYSSSV). Residues 252–261 (TASSSLAPGQ) show a composition bias toward polar residues. Composition is skewed to low complexity over residues 278 to 291 (QQQQQQQQQQQQQQ) and 339 to 353 (SPSSSHSPARSVGRS). 2 positions are modified to phosphoserine: S339 and S345. At T472 the chain carries Phosphothreonine. The span at 541–563 (RVNSNSKAKPESVSTCSVTSPDD) shows a compositional bias: polar residues. Phosphoserine is present on residues S568 and S683. Phosphothreonine is present on T696. S805 carries the phosphoserine modification. K811 is covalently cross-linked (Glycyl lysine isopeptide (Lys-Gly) (interchain with G-Cter in SUMO2)). A Glycyl lysine isopeptide (Lys-Gly) (interchain with G-Cter in SUMO1) cross-link involves residue K819. Phosphoserine occurs at positions 880 and 892. K901 participates in a covalent cross-link: Glycyl lysine isopeptide (Lys-Gly) (interchain with G-Cter in SUMO1); alternate. A Glycyl lysine isopeptide (Lys-Gly) (interchain with G-Cter in SUMO2); alternate cross-link involves residue K901. A compositionally biased stretch (polar residues) spans 937–947 (KVQSWFESSLS). 5 disordered regions span residues 937–1299 (KVQS…ETPD), 1344–1570 (FACK…PLDP), 1613–1637 (VVNSPGDAPKPHRKPSSSASSSSSS), 1746–1775 (AAAATAGKPPRPDGPADPAKQGPLRTSARG), and 1794–1819 (EEAAPADKGRKHECSKEAPAEPGGEA). Positions 950–962 (KPGEEGPDGERAP) are enriched in basic and acidic residues. Residues 996 to 1005 (KSLRSRRVHR) are compositionally biased toward basic residues. S1064 carries the post-translational modification Phosphoserine. Phosphothreonine is present on T1068. A compositionally biased stretch (low complexity) spans 1101-1119 (PSPKAASSPSNPAALPVAS). Position 1122 is a phosphoserine (S1122). 2 consecutive short sequence motifs (nuclear localization signal) follow at residues 1160 to 1177 (RRRPSEGRLPNCRATKKL) and 1223 to 1240 (KRKSAFMAPVPTKKRNLV). Low complexity predominate over residues 1242–1252 (RSRSSSSSNAS). Phosphoserine is present on residues S1352, S1358, and S1374. K1425 is covalently cross-linked (Glycyl lysine isopeptide (Lys-Gly) (interchain with G-Cter in SUMO2)). A Phosphoserine modification is found at S1431. Residues 1444 to 1453 (PKKRSRKGRA) show a composition bias toward basic residues. Composition is skewed to polar residues over residues 1482–1491 (SGTQGASEDN) and 1517–1534 (QPQTRAQKQPGHTNYSSY). Over residues 1535-1545 (SKRKRLTRGRA) the composition is skewed to basic residues. A compositionally biased stretch (low complexity) spans 1628-1637 (SSSASSSSSS). The C2HC pre-PHD-type zinc finger occupies 1780–1835 (LQSCYCCDGREDGGEEAAPADKGRKHECSKEAPAEPGGEAQEHWVHEACAVWTGGV). Over residues 1798 to 1812 (PADKGRKHECSKEAP) the composition is skewed to basic and acidic residues. The segment at 1855-1903 (MMCSSCQEAGATIGCCHKGCLHTYHYPCASDAGCIFIEENFSLKCPKHK) adopts a PHD-type zinc-finger fold.

In terms of tissue distribution, expressed in all tissues examined with higher expression in the heart and brain. No expression was seen in the corpus callosum of the brain.

The protein resides in the cytoplasm. Its subcellular location is the nucleus. Functionally, transcriptional regulator of the circadian clock components: CLOCK, BMAL1, BMAL2, PER1/3, CRY1/2, NR1D1/2 and RORA/C. Positively regulates the transcriptional activity of CLOCK a core component of the circadian clock. Regulates transcription through chromatin remodeling by interacting with other proteins in chromatin as well as proteins in the basic transcriptional machinery. May be important for embryonic and postnatal development. May be involved in neuronal differentiation. In Homo sapiens (Human), this protein is Retinoic acid-induced protein 1 (RAI1).